Here is a 555-residue protein sequence, read N- to C-terminus: Transmembrane protein 87A (555 aa).

Residues 1-21 (MAVAAWLQVSPVIFLLLGAQP) form the signal peptide. Residues 22–225 (FPLSFLGAGP…YEYLTLEDYP (204 aa)) are Lumenal-facing. 2 disulfides stabilise this stretch: cysteine 74–cysteine 128 and cysteine 89–cysteine 431. Asparagine 79, asparagine 157, and asparagine 160 each carry an N-linked (GlcNAc...) asparagine glycan. The chain crosses the membrane as a helical span at residues 226-246 (LMIFFMVMCIVYVLFGVLWLA). Residues 247 to 257 (WSACYWRDLLR) are Cytoplasmic-facing. A helical transmembrane segment spans residues 258-278 (IQFWIGAVIFLGMFEKAVFYA). Residues 279–305 (EFQNIRYKGESVQNALVLAELLSAVKR) lie on the Lumenal side of the membrane. Residues 306–322 (SLARTLVIIVSLGYGIV) form a helical membrane-spanning segment. Over 323-325 (KPR) the chain is Cytoplasmic. The helical transmembrane segment at 326-346 (LGVTLHKVVVAGALYLLFSGM) threads the bilayer. The Lumenal segment spans residues 347–361 (EGVLRVTGAQTDLAS). The chain crosses the membrane as a helical span at residues 362–382 (LAFIPLAFLDTALCWWIFISL). At 383–403 (TQTMKLLKLRRNIVKLSLYRH) the chain is on the cytoplasmic side. A helical membrane pass occupies residues 404–424 (FTNTLILAVAASIVFIIWTTM). Topologically, residues 425 to 437 (KFRIVTCQSDWRE) are lumenal. A helical transmembrane segment spans residues 438-458 (LWVDDAIWRLLFSMILFVIMI). Topologically, residues 459 to 555 (LWRPSANNQR…ITHFERSKME (97 aa)) are cytoplasmic. The disordered stretch occupies residues 491 to 515 (SFEGMKMRSTKQEPNGTSKVNKAQE). Residues 502 to 511 (QEPNGTSKVN) are compositionally biased toward polar residues. The residue at position 540 (serine 540) is a Phosphoserine.

Belongs to the LU7TM family. TMEM87 subfamily. As to quaternary structure, may interact with STOML3; STOML3 potentiates the mechanosensitive ion channel activity associated with TMEM87A. Highly expressed in sensory neurons responsive to mechanical force.

The protein resides in the cell membrane. The protein localises to the golgi apparatus membrane. Its subcellular location is the cell projection. It is found in the ruffle. In terms of biological role, potential monoatomic ion channel gated by mechanical force, implicated in normal touch sensitivity through the generation of mechanically activated currents. However, a direct channel activity is debated and an alternative could be that it functions as a chaperone for an unidentified mechanosensitive ion channel. Could also be involved in cell mechanosensitivity regulating cell adhesion and migration. May also be involved in retrograde transport from endosomes to the trans-Golgi network (TGN). The protein is Transmembrane protein 87A of Mus musculus (Mouse).